Consider the following 718-residue polypeptide: Scarecrow-like protein 9 (718 aa).

The tract at residues 305–338 is disordered; it reads VEKKKASDAQGGKRRARGRGRGRGRGGGGGQNGK. Basic residues predominate over residues 316 to 328; the sequence is GKRRARGRGRGRG. The GRAS domain maps to 335–713; sequence QNGKKEVVDL…RTVMALSVWK (379 aa). The tract at residues 342–402 is leucine repeat I (LRI); it reads VDLRSLLIHC…EARLAGTGSQ (61 aa). The tract at residues 421 to 484 is VHIID; that stretch reads HQLFLACCPF…YGSPKVRITG (64 aa). A VHIID motif is present at residues 452–456; sequence VHVID. Residues 500–532 form a leucine repeat II (LRII) region; that stretch reads ETGQRLAAYAKLFGVPFEYKAIAKKWDAIQLED. The tract at residues 541-635 is PFYRE; sequence TVVNCLYRAE…MEVFGREALN (95 aa). Residues 638-713 form an SAW region; it reads ACEGWERVER…RTVMALSVWK (76 aa).

It belongs to the GRAS family. In terms of tissue distribution, expressed in cotyledons, leaves and flowers, and in the elongation zone in root.

It localises to the nucleus. Functionally, probable transcription factor involved in plant development. This chain is Scarecrow-like protein 9 (SCL9), found in Arabidopsis thaliana (Mouse-ear cress).